We begin with the raw amino-acid sequence, 338 residues long: UDP-N-acetylglucosamine--N-acetylmuramyl-(pentapeptide) pyrophosphoryl-undecaprenol N-acetylglucosamine transferase (338 aa).

Residues Thr-10 to Gly-12, Asn-122, Ser-177, and Gln-275 each bind UDP-N-acetyl-alpha-D-glucosamine.

Belongs to the glycosyltransferase 28 family. MurG subfamily.

Its subcellular location is the cell inner membrane. It carries out the reaction di-trans,octa-cis-undecaprenyl diphospho-N-acetyl-alpha-D-muramoyl-L-alanyl-D-glutamyl-meso-2,6-diaminopimeloyl-D-alanyl-D-alanine + UDP-N-acetyl-alpha-D-glucosamine = di-trans,octa-cis-undecaprenyl diphospho-[N-acetyl-alpha-D-glucosaminyl-(1-&gt;4)]-N-acetyl-alpha-D-muramoyl-L-alanyl-D-glutamyl-meso-2,6-diaminopimeloyl-D-alanyl-D-alanine + UDP + H(+). Its pathway is cell wall biogenesis; peptidoglycan biosynthesis. Its function is as follows. Cell wall formation. Catalyzes the transfer of a GlcNAc subunit on undecaprenyl-pyrophosphoryl-MurNAc-pentapeptide (lipid intermediate I) to form undecaprenyl-pyrophosphoryl-MurNAc-(pentapeptide)GlcNAc (lipid intermediate II). In Sulfurovum sp. (strain NBC37-1), this protein is UDP-N-acetylglucosamine--N-acetylmuramyl-(pentapeptide) pyrophosphoryl-undecaprenol N-acetylglucosamine transferase.